A 319-amino-acid polypeptide reads, in one-letter code: MSESLKIIFAGTPDFSACHLQHLLSHRQKILGVFTQPDRPAGRGKKLAFSPVKILATQHHIPVYQPHSLGLKEEQQSILDLDADVMVVVAYGLLLPQAVLNMPRLGCINVHPSLLPRWRGAAPIQRAIWAGDQETGVTIMQMDSGLDTGNMLYKTVYPIQPDDTGASLQAKLAALGSQDLLLTLKKMAEGKMHGETQDEQKTTYAHKLTKKEARLDWLLPAAHLERCVRAFNPWPVSYFIINEQIIKVWEAQAMPDSQQVSHLQPGTVLKADKNGIQILTSEGVLNMTKFQLPGKKIISAWDFLNSRNEWFQIGKQLLS.

113-116 contributes to the (6S)-5,6,7,8-tetrahydrofolate binding site; that stretch reads SLLP.

It belongs to the Fmt family.

The catalysed reaction is L-methionyl-tRNA(fMet) + (6R)-10-formyltetrahydrofolate = N-formyl-L-methionyl-tRNA(fMet) + (6S)-5,6,7,8-tetrahydrofolate + H(+). Attaches a formyl group to the free amino group of methionyl-tRNA(fMet). The formyl group appears to play a dual role in the initiator identity of N-formylmethionyl-tRNA by promoting its recognition by IF2 and preventing the misappropriation of this tRNA by the elongation apparatus. The sequence is that of Methionyl-tRNA formyltransferase from Hamiltonella defensa subsp. Acyrthosiphon pisum (strain 5AT).